A 204-amino-acid polypeptide reads, in one-letter code: Heart- and neural crest derivatives-expressed protein 1 (204 aa).

Disordered regions lie at residues 1–24 (MNLV…HPAH), 57–115 (APDF…RTES), and 172–204 (LKKA…EKRD). Composition is skewed to basic residues over residues 8–22 (AHHH…HPHP) and 98–110 (LGRR…KKER). One can recognise a bHLH domain in the interval 100-152 (RRKGSGPKKERRRTESINSAFAELRECIPNVPADTKLSKIKTLRLATSYIAYL). Threonine 113 is modified (phosphothreonine; by PLK4). Phosphoserine; by PLK4 is present on serine 115.

In terms of assembly, efficient DNA binding requires dimerization with another bHLH protein. Forms homodimers and heterodimers with TCF3 gene products E12 and E47, HAND2 and HEY1, HEY2 and HEYL (hairy-related transcription factors). Interacts with MDFIC. Interacts with SOX15; the interaction enhances HAND1-induced differentiation of trophoblast giant cells. In terms of processing, phosphorylation by PLK4 disrupts the interaction with MDFIC and leads to translocation into the nucleoplasm, allowing dimerization and transcription factor activity.

The protein localises to the nucleus. It is found in the nucleoplasm. The protein resides in the nucleolus. Transcription factor that plays an essential role in both trophoblast giant cell differentiation and in cardiac morphogenesis. Binds the DNA sequence 5'-NRTCTG-3' (non-canonical E-box). Acts as a transcriptional repressor of SOX15. In the adult, could be required for ongoing expression of cardiac-specific genes. The protein is Heart- and neural crest derivatives-expressed protein 1 (HAND1) of Ovis aries (Sheep).